A 1477-amino-acid polypeptide reads, in one-letter code: FHA domain-containing protein PS1 (1477 aa).

Residues 64-115 (LVVGRHPDCDILLTHPSISRFHLEIRSISSRQKLFVTDLSSVHGTWVRDLRI) enclose the FHA domain. Disordered stretches follow at residues 188-218 (ENTT…DEDT), 588-644 (LGKA…PKSF), 789-818 (PNSF…DSEF), 832-911 (LNQK…LIGS), 942-979 (ALAA…RDDV), 1004-1030 (IRTN…KQAL), and 1159-1225 (VEQE…IRSS). Over residues 589 to 607 (GKADIRSHEENGESEDSRQ) the composition is skewed to basic and acidic residues. Positions 832-849 (LNQKRNGETKVSSRQASP) are enriched in polar residues. A compositionally biased stretch (low complexity) spans 870 to 883 (QSLCSSSQPPSESE). Composition is skewed to polar residues over residues 885-897 (NPAT…SGII), 957-971 (LSSS…QTPE), 1007-1018 (NKSQGKQKQTGR), and 1198-1212 (SSFQ…SSTA). Residues 1213–1225 (SARNNISRGIRSS) show a composition bias toward low complexity.

Its function is as follows. Required for normal spindle orientation at male meiosis II and normal formation of tetrad of microspores. Not involved in female meiosis. This Arabidopsis thaliana (Mouse-ear cress) protein is FHA domain-containing protein PS1.